The following is a 474-amino-acid chain: Iroquois-class homeodomain protein irx-5 (474 aa).

Positions 109 to 171 form a DNA-binding region, homeobox; TALE-type; it reads DPAYRKNASR…NARRRLKKEN (63 aa). 3 disordered regions span residues 174-222, 252-294, and 453-474; these read TWTP…SPDG, ERNG…IQQL, and SQSQDDLNKGTPYEMKKGMSSI. The span at 182–199 shows a compositional bias: acidic residues; it reads EDEDDDENIDLEKNEEDD. Residues 263–273 show a composition bias toward pro residues; that stretch reads PPTPPLCPPDQ.

This sequence belongs to the TALE/IRO homeobox family. Early in gastrulation, expressed in cells beneath the blastopore lip. Subsequently expressed in the neural plate in overlapping patterns with other irx members, which all share an anterior border of expression. At the time of neural tube closure (stage 19) in regions of the midbrain, hindbrain, neural tube and optic vesicle, where expression continues during tailbud stages. In stage 34, expressed throughout the eye retina. Does not appear to be expressed in the developing heart or pronephros.

It localises to the nucleus. Acts partially redundantly with other irx members in neural patterning. Required for formation of the posterior forebrain, midbrain, hindbrain, and to a lesser extent, spinal cord. Patterns the neuroectoderm in both the anterior/posterior and dorsal/ventral axes. Does not appear to play a role in pronephros kidney development. Involved in craniofacial and gonadal development. Modulates the migration of progenitor cell populations in branchial arches and gonads by repressing CXCL12. This is Iroquois-class homeodomain protein irx-5 (irx5) from Xenopus laevis (African clawed frog).